Reading from the N-terminus, the 199-residue chain is Charged multivesicular body protein 1b (199 aa).

2 coiled-coil regions span residues 8 to 42 (LFNL…AIQK) and 178 to 199 (TSVA…RDQV). The interval 167–199 (ELPQGQTGSVGTSVASTEQDELSQRLARLRDQV) is disordered. Over residues 170-183 (QGQTGSVGTSVAST) the composition is skewed to polar residues. The MIT-interacting motif signature appears at 186-196 (DELSQRLARLR).

This sequence belongs to the SNF7 family. Probable peripherally associated component of the endosomal sorting required for transport complex III (ESCRT-III).

Its subcellular location is the cytoplasm. The protein localises to the cytosol. It is found in the endosome. The protein resides in the late endosome membrane. Probable peripherally associated component of the endosomal sorting required for transport complex III (ESCRT-III) which is involved in multivesicular bodies (MVBs) formation and sorting of endosomal cargo proteins into MVBs. MVBs contain intraluminal vesicles (ILVs) that are generated by invagination and scission from the limiting membrane of the endosome and mostly are delivered to lysosomes enabling degradation of membrane proteins, such as stimulated growth factor receptors, lysosomal enzymes and lipids. This Xenopus laevis (African clawed frog) protein is Charged multivesicular body protein 1b (chmp1b).